The primary structure comprises 493 residues: Cardiolipin synthase 1 (493 aa).

2 helical membrane passes run 13–33 (FTIILAIGFIINLVLAFIIIF) and 45–65 (WAWLFVLFVLPLIGFILYLFF). PLD phosphodiesterase domains follow at residues 228–255 (MNNRNHRKIIVIDGQLGYVGGFNIGDEY) and 406–433 (ENGFIHSKMCLIDDEIVSVGTANMDFRS). Catalysis depends on residues His233, Lys235, Asp240, His411, Lys413, and Asp418.

It belongs to the phospholipase D family. Cardiolipin synthase subfamily.

The protein localises to the cell membrane. It catalyses the reaction 2 a 1,2-diacyl-sn-glycero-3-phospho-(1'-sn-glycerol) = a cardiolipin + glycerol. In terms of biological role, catalyzes the reversible phosphatidyl group transfer from one phosphatidylglycerol molecule to another to form cardiolipin (CL) (diphosphatidylglycerol) and glycerol. In Staphylococcus aureus (strain COL), this protein is Cardiolipin synthase 1 (cls1).